Reading from the N-terminus, the 129-residue chain is Small ribosomal subunit protein uS11 (129 aa).

Belongs to the universal ribosomal protein uS11 family. In terms of assembly, part of the 30S ribosomal subunit. Interacts with proteins S7 and S18. Binds to IF-3.

Located on the platform of the 30S subunit, it bridges several disparate RNA helices of the 16S rRNA. Forms part of the Shine-Dalgarno cleft in the 70S ribosome. This Lacticaseibacillus casei (strain BL23) (Lactobacillus casei) protein is Small ribosomal subunit protein uS11.